The chain runs to 44 residues: Photosystem I reaction center subunit IX (44 aa).

A helical membrane pass occupies residues 7 to 27 (YLSVAPVLSTLWFGSLAGLLI).

The protein belongs to the PsaJ family.

It localises to the plastid. Its subcellular location is the chloroplast thylakoid membrane. Functionally, may help in the organization of the PsaE and PsaF subunits. The chain is Photosystem I reaction center subunit IX from Lactuca sativa (Garden lettuce).